The following is a 730-amino-acid chain: Acetylene hydratase (730 aa).

2 residues coordinate [4Fe-4S] cluster: Cys-9 and Cys-12. Asp-13 is an active-site residue. Cys-16 and Cys-46 together coordinate [4Fe-4S] cluster. Residues Lys-48, Thr-111–Asn-114, Cys-141, Lys-172–Asn-173, His-177–Trp-179, Leu-199–Arg-202, Tyr-218–Asp-221, Ser-296, Gln-300, Ala-416–Asn-418, Gly-422–Tyr-423, Tyr-442–Gln-444, Asp-460, Arg-465, Phe-602–Ser-613, Arg-606, His-676, Asp-699, and Arg-720 each bind W-bis(molybdopterin guanine dinucleotide).

The protein belongs to the prokaryotic molybdopterin-containing oxidoreductase family. In terms of assembly, monomer. [4Fe-4S] cluster is required as a cofactor. W-bis(molybdopterin guanine dinucleotide) serves as cofactor.

It carries out the reaction acetaldehyde = acetylene + H2O. Its function is as follows. Catalyzes the hydration of acetylene to form acetaldehyde. Ethylene cannot act as a substrate. The protein is Acetylene hydratase of Syntrophotalea acetylenica (Pelobacter acetylenicus).